Consider the following 372-residue polypeptide: Cytochrome b (372 aa).

Transmembrane regions (helical) follow at residues 25–45, 69–90, 105–125, and 170–190; these read FGSM…FLAI, WMMQ…YIHI, WLSG…GYVL, and FFAL…IHIM. Heme b-binding residues include histidine 75 and histidine 89. 2 residues coordinate heme b: histidine 174 and histidine 188. Histidine 193 contacts a ubiquinone. 4 helical membrane-spanning segments follow: residues 218–238, 280–300, 312–332, and 339–358; these read HKDM…MSFN, LGGA…PFTH, LMQF…WAAT, and FTTI…IMNP.

This sequence belongs to the cytochrome b family. In terms of assembly, the cytochrome bc1 complex contains 3 respiratory subunits (MT-CYB, CYC1 and UQCRFS1), 2 core proteins (UQCRC1 and UQCRC2) and probably 6 low-molecular weight proteins. Heme b is required as a cofactor.

The protein resides in the mitochondrion inner membrane. Its function is as follows. Component of the ubiquinol-cytochrome c reductase complex (complex III or cytochrome b-c1 complex) that is part of the mitochondrial respiratory chain. The b-c1 complex mediates electron transfer from ubiquinol to cytochrome c. Contributes to the generation of a proton gradient across the mitochondrial membrane that is then used for ATP synthesis. The sequence is that of Cytochrome b (MT-CYB) from Pantherophis bairdi (Baird's ratsnake).